Here is a 290-residue protein sequence, read N- to C-terminus: Aquaporin PIP2-1 (290 aa).

The disordered stretch occupies residues 1–20 (MGKDDVIESGAGGGEFAAKD). 2 consecutive transmembrane segments (helical) span residues 43–63 (AVIA…ATVI) and 80–100 (CGGV…FVLV). The short motif at 112–114 (NPA) is the NPA 1 element. A run of 3 helical transmembrane segments spans residues 131–151 (LLYI…VKAF), 173–193 (GTGL…VFSA), and 205–225 (VPVL…LATI). Residues 233 to 235 (NPA) carry the NPA 2 motif. Residues 255 to 275 (IFWVGPLVGAAIAAFYHQYIL) traverse the membrane as a helical segment.

Belongs to the MIP/aquaporin (TC 1.A.8) family. PIP (TC 1.A.8.11) subfamily. Homomers. Can interact with PIP1-2 to form heteromers. Expressed in roots.

It is found in the cell membrane. Its function is as follows. Water channel required to facilitate the transport of water across cell membrane. Active as homomers. Increased activity when heteromerization with PIP1-2. This Zea mays (Maize) protein is Aquaporin PIP2-1 (PIP2-1).